A 267-amino-acid chain; its full sequence is Matrilysin (267 aa).

The N-terminal stretch at 1–20 (MAAMRLTLFRIVCLLPGCLA) is a signal peptide. Residues 21–97 (LPLSQEAGEV…PRCGVPDVAE (77 aa)) constitute a propeptide, activation peptide. Positions 88-95 (PRCGVPDV) match the Cysteine switch motif. Cysteine 90 provides a ligand contact to Zn(2+). Position 156 (aspartate 156) interacts with Ca(2+). Residues histidine 166 and aspartate 168 each coordinate Zn(2+). Ca(2+) contacts are provided by aspartate 173, glycine 174, glycine 176, and threonine 178. Zn(2+) is bound at residue histidine 181. Ca(2+) is bound by residues glycine 188, glycine 190, and aspartate 192. A Zn(2+)-binding site is contributed by histidine 194. Residues aspartate 196 and glutamate 199 each contribute to the Ca(2+) site. Histidine 217 provides a ligand contact to Zn(2+). Residue glutamate 218 is part of the active site. Residues histidine 221 and histidine 227 each coordinate Zn(2+).

This sequence belongs to the peptidase M10A family. Ca(2+) is required as a cofactor. Requires Zn(2+) as cofactor.

The protein localises to the secreted. Its subcellular location is the extracellular space. It is found in the extracellular matrix. The catalysed reaction is Cleavage of 14-Ala-|-Leu-15 and 16-Tyr-|-Leu-17 in B chain of insulin. No action on collagen types I, II, IV, V. Cleaves gelatin chain alpha2(I) &gt; alpha1(I).. Its function is as follows. Degrades casein, gelatins of types I, III, IV, and V, and fibronectin. Activates procollagenase. This is Matrilysin (Mmp7) from Rattus norvegicus (Rat).